We begin with the raw amino-acid sequence, 933 residues long: Phosphoenolpyruvate carboxylase (933 aa).

Active-site residues include His-158 and Lys-592.

Belongs to the PEPCase type 1 family. It depends on Mg(2+) as a cofactor.

The catalysed reaction is oxaloacetate + phosphate = phosphoenolpyruvate + hydrogencarbonate. Forms oxaloacetate, a four-carbon dicarboxylic acid source for the tricarboxylic acid cycle. In Nitrosomonas eutropha (strain DSM 101675 / C91 / Nm57), this protein is Phosphoenolpyruvate carboxylase.